Reading from the N-terminus, the 122-residue chain is Phosphoribosyl-ATP pyrophosphatase (122 aa).

The protein belongs to the PRA-PH family.

It localises to the cytoplasm. The catalysed reaction is 1-(5-phospho-beta-D-ribosyl)-ATP + H2O = 1-(5-phospho-beta-D-ribosyl)-5'-AMP + diphosphate + H(+). The protein operates within amino-acid biosynthesis; L-histidine biosynthesis; L-histidine from 5-phospho-alpha-D-ribose 1-diphosphate: step 2/9. The protein is Phosphoribosyl-ATP pyrophosphatase of Burkholderia mallei (strain NCTC 10247).